The sequence spans 231 residues: Flagellar L-ring protein (231 aa).

A signal peptide spans 1–18 (MNRLMIVSLLGIATALGG). Cysteine 19 carries N-palmitoyl cysteine lipidation. A lipid anchor (S-diacylglycerol cysteine) is attached at cysteine 19. Residues 118–141 (LSLSAEYGGSRDAKGDSQAGQSNS) are disordered.

It belongs to the FlgH family. In terms of assembly, the basal body constitutes a major portion of the flagellar organelle and consists of four rings (L,P,S, and M) mounted on a central rod.

It is found in the cell outer membrane. It localises to the bacterial flagellum basal body. Assembles around the rod to form the L-ring and probably protects the motor/basal body from shearing forces during rotation. The polypeptide is Flagellar L-ring protein (Pseudomonas aeruginosa (strain UCBPP-PA14)).